The sequence spans 113 residues: uncharacterized protein (113 aa).

This is an uncharacterized protein from Acanthamoeba polyphaga mimivirus (APMV).